A 731-amino-acid chain; its full sequence is E3 ubiquitin-protein ligase SMURF1 (731 aa).

The C2 domain occupies M1–K120. At S200 the chain carries Phosphoserine. The tract at residues E216–P237 is disordered. 2 consecutive WW domains span residues P234–I267 and G280–L313. Residues K355 and K357 each participate in a glycyl lysine isopeptide (Lys-Gly) (interchain with G-Cter in ubiquitin) cross-link. The HECT domain occupies R394 to E731. C699 functions as the Glycyl thioester intermediate in the catalytic mechanism.

As to quaternary structure, interacts with TRAF4. Interacts (via HECT domain) with FBXL15 (via LRR repeats). Interacts with SMAD7 and TGFBR1; SMAD7 recruits SMURF1 to TGFBR1 and regulates TGF-beta receptor degradation. Interacts with MAVS; the interaction is mediated by NDFIP1. Post-translationally, auto-ubiquitinated in presence of NDFIP1. Ubiquitinated by the SCF(FBXL15) complex at Lys-355 and Lys-357, leading to its degradation by the proteasome. Lys-357 is the primary ubiquitination site.

It localises to the cytoplasm. The protein resides in the cell membrane. It catalyses the reaction S-ubiquitinyl-[E2 ubiquitin-conjugating enzyme]-L-cysteine + [acceptor protein]-L-lysine = [E2 ubiquitin-conjugating enzyme]-L-cysteine + N(6)-ubiquitinyl-[acceptor protein]-L-lysine.. It functions in the pathway protein modification; protein ubiquitination. Its function is as follows. E3 ubiquitin-protein ligase that acts as a negative regulator of BMP signaling pathway. Mediates ubiquitination and degradation of SMAD1 and SMAD5, 2 receptor-regulated SMADs specific for the BMP pathway. Promotes ubiquitination and subsequent proteasomal degradation of TRAF family members and RHOA. Promotes ubiquitination and subsequent proteasomal degradation of MAVS. Acts as an antagonist of TGF-beta signaling by ubiquitinating TGFBR1 and targeting it for degradation. Plays a role in dendrite formation by melanocytes. This Mus musculus (Mouse) protein is E3 ubiquitin-protein ligase SMURF1 (Smurf1).